Consider the following 403-residue polypeptide: Aspartic protease pepA (403 aa).

An N-terminal signal peptide occupies residues 1–20; that stretch reads MVLITQLGAALAVFSALTVA. Residues 21 to 67 constitute a propeptide, activation peptide; it reads APTKGKARFSAPQVGIPKKAKHHPAAAYARALHKFGMKIPKAVSDAA. The region spanning 82–400 is the Peptidase A1 domain; sequence YVTQVTVGGS…DTQGPRIGFA (319 aa). D98 is an active-site residue. N-linked (GlcNAc...) asparagine glycosylation occurs at N270. D293 is a catalytic residue. A disulfide bridge links C329 with C362.

It belongs to the peptidase A1 family. As to quaternary structure, monomer.

Its subcellular location is the secreted. Secreted aspartic endopeptidase that allows assimilation of proteinaceous substrates. The scissile peptide bond is attacked by a nucleophilic water molecule activated by two aspartic residues in the active site. Shows a broad primary substrate specificity. Favors hydrophobic residues at the P1 and P1' positions. The chain is Aspartic protease pepA from Arthroderma gypseum (strain ATCC MYA-4604 / CBS 118893) (Microsporum gypseum).